We begin with the raw amino-acid sequence, 883 residues long: Pre-mRNA-splicing factor syf1 homolog (883 aa).

HAT repeat units lie at residues 13–45 (INFE…HKAK), 46–78 (APNN…TRRK), 88–120 (PMYE…FMTS), 122–156 (CKIT…FVRR), 158–190 (EMPE…EADR), 268–303 (GLFD…FEEL), 368–406 (DKPA…FYEA), 463–495 (KRKI…LEES), 531–565 (NYFE…KFLE), 570–604 (TKLE…LEEE), 642–676 (YGLP…LETK), and 678–712 (GEVD…FEVR). Disordered regions lie at residues 794–851 (RGET…DEEG) and 864–883 (IPAK…SDGE). Positions 812-834 (DEIDIGDSDEDDEEEDDDEENEM) are enriched in acidic residues. Composition is skewed to polar residues over residues 835–844 (TNENQASAAV) and 873–883 (KPSNQGDSDGE).

The protein belongs to the crooked-neck family. As to quaternary structure, component of the NTC(Nineteen)/Prp19 complex composed of at least fand, Prp19,CG9667/ISY1 and Cdc5/CDC5L. Within the complex, interacts with Prp19 and ISY1/CG9667.

The protein localises to the nucleus. Subunit of the NTC(Nineteen)/Prp19 complex, which is part of the spliceosome. The complex participates in spliceosome assembly, its remodeling and is required for efficient spliceosome activation. Essential for efficient pre-mRNA splicing. In embryos, efficient pre-mRNA splicing of zygotic transcripts is essential during dynamic cellular processes that require rapid division and/or dramatic changes in gene expression such as blastoderm cellularization, tracheal branching morphogenesis, Malpighian morphogenesis and epidermal development. Part of its role in promoting embryo tracheal development is also due to specifically splicing bnl transcripts which results in the activation of the BNL-FGF pathway. In Drosophila melanogaster (Fruit fly), this protein is Pre-mRNA-splicing factor syf1 homolog.